Consider the following 693-residue polypeptide: Heat shock protein homolog SSE1 (693 aa).

Serine 2 bears the N-acetylserine mark. Lysine 195 participates in a covalent cross-link: Glycyl lysine isopeptide (Lys-Gly) (interchain with G-Cter in ubiquitin). Threonine 242 carries the phosphothreonine modification. Positions 653 to 693 (IRSKQEASQMAAMAEKLAAQRKAEAEKKEEKKDTEGDVDMD) are disordered. Serine 660 carries the phosphoserine modification. A compositionally biased stretch (basic and acidic residues) spans 673–687 (RKAEAEKKEEKKDTE).

Belongs to the heat shock protein 70 family.

The protein resides in the cytoplasm. In terms of biological role, has a calcium-dependent calmodulin-binding activity. Required for normal growth at various temperatures. The chain is Heat shock protein homolog SSE1 (SSE1) from Saccharomyces cerevisiae (strain ATCC 204508 / S288c) (Baker's yeast).